Consider the following 599-residue polypeptide: MLYPLLTKTRNTYDLGGIWNFKLGEHNPNELLPSDEVMVIPTSFNDLMVSKEKRDYIGDFWYEKVIEVPKVSEDEEMVLRFGSVTHQAKIYVDGVLVGEHKGGFTPFEVLVPECKYNNEKIKVSICANNVLDYTTLPVGNYSEIIQEDGSIKKKVRENFDFFNYAGVHRPLKLMIRPKNHIFDITITSRLSDDLQSADLHFLVETNQKVDEVRISVFDEDNKLVGETKDSRLFLSDVHLWEVLNAYLYTARVEIFVDNQLQDVYEENFGLREIEVTNGQFLLNRKPIYFKGFGKHEDTFINGRGLNEAANLMDLNLLKDMGANSFRTSHYPYSEEMMRLADRMGVLVIDEVPAVGLFQNFNASLDLSPKDNGTWNLMQTKAAHEQAIQELVKRDKNHPSVVMWVVANEPASHEAGAHDYFEPLVKLYKDLDPQKRPVTLVNILMATPDRDQVMDLVDVVCLNRYYGWYVDHGDLTNAEVGIRKELLEWQDKFPDKPIIITEYGADTLPGLHSTWNIPYTEEFQCDFYEMSHRVFDGIPNLVGEQVWNFADFETNLMILRVQGNHKGLFSRNRQPKQVVKEFKKRWMTIPHYHNKKNSVK.

Residues Asp-160 and Asn-407 each contribute to the D-glucuronate site. The Proton donor role is filled by Glu-408. Residues Asn-462, Tyr-468, Glu-501, Trp-546, and Lys-565 each coordinate D-glucuronate. The Nucleophile role is filled by Glu-501. The short motif at 563-565 (NHK) is the N-K motif element.

This sequence belongs to the glycosyl hydrolase 2 family.

It carries out the reaction a beta-D-glucuronoside + H2O = D-glucuronate + an alcohol. Inhibited by a set of synthetic compounds like thio-urea derivatives and analogs. Inhibitors of gut microbial beta-glucuronidases are expected to block the reactivation of glucuronidated cancer drugs, and to alleviate drug-induced GI toxicity. Its function is as follows. Displays beta-glucuronidase activity with the artificial substrate p-nitrophenyl-beta-D-glucuronide (PNPG). Is likely capable of scavenging glucuronate from a range of chemically distinct xenobiotic and endobiotic glucuronides present in the gastrointestinal (GI) tract, to be able to utilize these diverse sources of carbon. As part of the GI microbiome, this enzyme would be able to reactivate glucuronide drug conjugates, such reactivated compounds can significantly damage the GI tract. The protein is Beta-glucuronidase of Streptococcus agalactiae serotype V (strain ATCC BAA-611 / 2603 V/R).